A 317-amino-acid chain; its full sequence is MQKEIYYTFDINNIKDKEFTKVFVDCPWEAIRNPTPIDESEHLQWLKDSNLFDCDQDAENFFKDKTYIMSSYINPLNPKDNIIWVIRMHDFIYIVDDFYFEKGLLGEEWVINMFDRDAPQDKIGKTFWNIIEGMEKTGNKKAVEQLLHDTKIWALSVFTYNKCNINSESSFEYYCKYRCLDVGMDFGLSTAKVFAEPLPKEVLESSTYKRIIFGYNQTHSLINDMVSFERERKESNRMANYVMVHAYKTNSVQESMYHCKQMVEGVFNEINVLCEQLKREFPDVSNLDFHLNLIKLVISGDNYVSNDTTYPRYNLNH.

The DDxx(x)D/E motif motif lies at 96-101 (DDFYFE). Positions 223–231 (NDMVSFERE) match the NDxxSxxxD/E motif motif.

Belongs to the terpene synthase family.

Terpene synthase that converts its substrate farnesyl diphosphate (FPP) into the sesquiterpene CAS 137235-51-9 as a major product. Is also able to convert FPP into 9-epi-(E)-caryophyllene, alpha-neoclovene, beta-neoclovene, and 3 yet unidentified sesquiterpenes. This Dictyostelium purpureum (Slime mold) protein is Terpene synthase 3.